The primary structure comprises 1416 residues: 1-phosphatidylinositol 4,5-bisphosphate phosphodiesterase eta-2 (1416 aa).

The interval 1–155 (MSGPWPSPDS…WVTGLRYLMA (155 aa)) is necessary for plasma membrane localization. Residues 47–155 (GAMQEGMQMV…WVTGLRYLMA (109 aa)) form the PH domain. EF-hand domains lie at 169-204 (TRDQ…LNVN) and 205-241 (LPRQ…MSTR). 5 residues coordinate Ca(2+): Asp-182, Asn-184, Asp-186, Ser-188, and Glu-193. The region spanning 326–471 (QDMTQPLSHY…LKGKILVKGK (146 aa)) is the PI-PLC X-box domain. Residue His-341 is part of the active site. Asn-342, Glu-371, and Asp-373 together coordinate Ca(2+). His-385 is an active-site residue. Glu-420 is a binding site for Ca(2+). Residues Lys-469 and Lys-471 each contribute to the substrate site. 2 positions are modified to phosphoserine: Ser-487 and Ser-491. Residues 535 to 620 (DPNNFSVSTL…RGATRQKKTM (86 aa)) form a disordered region. The span at 537–546 (NNFSVSTLSP) shows a compositional bias: polar residues. Positions 581-592 (SRRKKKGSKLKK) are enriched in basic residues. Ser-595 and Ser-605 each carry phosphoserine. One can recognise a PI-PLC Y-box domain in the interval 626 to 740 (LSDLVKYTKS…GYVLKPGCMC (115 aa)). Substrate-binding residues include Ser-653 and Arg-680. The 130-residue stretch at 740 to 869 (CQGVFNPNSE…PGYRHVYLEG (130 aa)) folds into the C2 domain. Residues Ile-784, Asp-786, Asp-810, Asp-839, His-840, and Asp-841 each contribute to the Ca(2+) site. Disordered stretches follow at residues 905 to 1109 (GSLD…GGWR), 1121 to 1222 (YSDA…LQPR), and 1315 to 1405 (ITSP…GPAS). Residues 1011–1021 (APGPGPPPPAA) show a composition bias toward pro residues. Polar residues predominate over residues 1073 to 1083 (GSQTDGRSQPR). The span at 1143–1166 (VSSSSSMSSSDTVIDLSLPSLGLG) shows a compositional bias: low complexity. A compositionally biased stretch (polar residues) spans 1199–1208 (KSKSNPNLRA). Residues 1324–1333 (AGEGVAGGPG) show a composition bias toward gly residues.

It depends on Ca(2+) as a cofactor. As to expression, expressed in retina and kidney.

It is found in the cytoplasm. It localises to the cell membrane. It carries out the reaction a 1,2-diacyl-sn-glycero-3-phospho-(1D-myo-inositol-4,5-bisphosphate) + H2O = 1D-myo-inositol 1,4,5-trisphosphate + a 1,2-diacyl-sn-glycerol + H(+). Its activity is regulated as follows. Activity is stimulated by GNB1:GNG2. Functionally, the production of the second messenger molecules diacylglycerol (DAG) and inositol 1,4,5-trisphosphate (IP3) is mediated by activated phosphatidylinositol-specific phospholipase C enzymes. This phospholipase activity is very sensitive to calcium. May be important for formation and maintenance of the neuronal network in the postnatal brain. The chain is 1-phosphatidylinositol 4,5-bisphosphate phosphodiesterase eta-2 from Homo sapiens (Human).